Reading from the N-terminus, the 299-residue chain is Exosome complex component rrp42 (299 aa).

Belongs to the RNase PH family. In terms of assembly, component of the RNA exosome complex. Specifically part of the catalytically inactive RNA exosome core complex (Exo-9) which may associate with the catalytic subunits rrp6 and dis3 in cytoplasmic- and nuclear-specific RNA exosome complex forms. Exo-9 is formed by a hexameric base ring of RNase PH domain-containing subunits and a cap ring consisting of csl4, rrp4 and rrp40.

The protein resides in the cytoplasm. It localises to the nucleus. Its subcellular location is the nucleolus. In terms of biological role, non-catalytic component of the RNA exosome complex which has 3'-&gt;5' exoribonuclease activity and participates in a multitude of cellular RNA processing and degradation events. In the nucleus, the RNA exosome complex is involved in proper maturation of stable RNA species such as rRNA, snRNA and snoRNA, in the elimination of RNA processing by-products and non-coding 'pervasive' transcripts, such as antisense RNA species and cryptic unstable transcripts (CUTs), and of mRNAs with processing defects, thereby limiting or excluding their export to the cytoplasm. In the cytoplasm, the RNA exosome complex is involved in general mRNA turnover and in RNA surveillance pathways, preventing translation of aberrant mRNAs. The catalytic inactive RNA exosome core complex of 9 subunits (Exo-9) is proposed to play a pivotal role in the binding and presentation of RNA for ribonucleolysis, and to serve as a scaffold for the association with catalytic subunits and accessory proteins or complexes. ski6 is part of the hexameric ring of RNase PH domain-containing subunits proposed to form a central channel which threads RNA substrates for degradation. This is Exosome complex component rrp42 (rrp42) from Schizosaccharomyces pombe (strain 972 / ATCC 24843) (Fission yeast).